A 480-amino-acid chain; its full sequence is Uridine 5'-monophosphate synthase (480 aa).

At Ala2 the chain carries N-acetylalanine. The segment at 2–214 (AVARAALGPL…VFVAANHNGS (213 aa)) is OPRTase. A Phosphotyrosine modification is found at Tyr37. Phosphoserine is present on Ser214. The domain linker stretch occupies residues 215 to 220 (PLSIKE). The tract at residues 221–480 (APKELSFGAR…WEAYLSRLGV (260 aa)) is OMPdecase. Ser257 lines the orotidine 5'-phosphate pocket. Residues Ser257, Asp259, and 281–283 (KTH) each bind UMP. Lys281 lines the orotidine 5'-phosphate pocket. Residues Asp312, Lys314, and Asp317 each act as for OMPdecase activity in the active site. Residues Lys314, Asp317, Thr321, Ser372, 430 to 432 (QQY), and 450 to 451 (GR) contribute to the orotidine 5'-phosphate site. UMP-binding positions include Asp317, Thr321, Ser372, 430-432 (QQY), and 450-451 (GR).

The protein in the N-terminal section; belongs to the purine/pyrimidine phosphoribosyltransferase family. It in the C-terminal section; belongs to the OMP decarboxylase family. Homodimer; dimerization is required for enzymatic activity.

The catalysed reaction is orotidine 5'-phosphate + diphosphate = orotate + 5-phospho-alpha-D-ribose 1-diphosphate. The enzyme catalyses orotidine 5'-phosphate + H(+) = UMP + CO2. The protein operates within pyrimidine metabolism; UMP biosynthesis via de novo pathway; UMP from orotate: step 1/2. It participates in pyrimidine metabolism; UMP biosynthesis via de novo pathway; UMP from orotate: step 2/2. Its function is as follows. Bifunctional enzyme catalyzing the last two steps of de novo pyrimidine biosynthesis, orotate phosphoribosyltransferase (OPRT), which converts orotate to orotidine-5'-monophosphate (OMP), and orotidine-5'-monophosphate decarboxylase (ODC), the terminal enzymatic reaction that decarboxylates OMP to uridine monophosphate (UMP). This Homo sapiens (Human) protein is Uridine 5'-monophosphate synthase.